A 393-amino-acid chain; its full sequence is Pyrimidine monooxygenase RutA (393 aa).

FMN contacts are provided by residues 79-80 (IK), N145, E154, 170-171 (RY), and S220.

It belongs to the NtaA/SnaA/DszA monooxygenase family. RutA subfamily.

The enzyme catalyses uracil + FMNH2 + NADH + O2 = (Z)-3-ureidoacrylate + FMN + NAD(+) + H2O + H(+). The catalysed reaction is thymine + FMNH2 + NADH + O2 = (Z)-2-methylureidoacrylate + FMN + NAD(+) + H2O + H(+). Its function is as follows. Catalyzes the pyrimidine ring opening between N-3 and C-4 by an unusual flavin hydroperoxide-catalyzed mechanism, adding oxygen atoms in the process to yield ureidoacrylate peracid, that immediately reacts with FMN forming ureidoacrylate and FMN-N(5)-oxide. The FMN-N(5)-oxide reacts spontaneously with NADH to produce FMN. Requires the flavin reductase RutF to regenerate FMN in vivo. The chain is Pyrimidine monooxygenase RutA from Escherichia coli O6:H1 (strain CFT073 / ATCC 700928 / UPEC).